The following is a 326-amino-acid chain: Glyoxalase I (326 aa).

2 VOC domains span residues 22–167 and 182–322; these read LLNH…LITY and KFNH…VVPH. H25 contributes to the Zn(2+) binding site. R29 contacts substrate. E89 is a Zn(2+) binding site. Substrate-binding positions include N93, R113, H117, and 147–148; that span reads RQ. Residue H117 coordinates Zn(2+). E163 provides a ligand contact to Zn(2+). Active-site proton donor/acceptor residues include E163 and E318.

This sequence belongs to the glyoxalase I family. As to quaternary structure, monomer. The cofactor is Zn(2+).

The enzyme catalyses (R)-S-lactoylglutathione = methylglyoxal + glutathione. It functions in the pathway secondary metabolite metabolism; methylglyoxal degradation; (R)-lactate from methylglyoxal: step 1/2. In terms of biological role, catalyzes the conversion of hemimercaptal, formed from methylglyoxal and glutathione, to S-lactoylglutathione. Can use gamma-glutamylcysteine as a substrate. In Saccharomyces cerevisiae (strain ATCC 204508 / S288c) (Baker's yeast), this protein is Glyoxalase I.